The primary structure comprises 187 residues: Peptide deformylase 2 (187 aa).

2 residues coordinate Fe cation: cysteine 107 and histidine 149. The active site involves glutamate 150. Histidine 153 contacts Fe cation.

It belongs to the polypeptide deformylase family. The cofactor is Fe(2+).

It catalyses the reaction N-terminal N-formyl-L-methionyl-[peptide] + H2O = N-terminal L-methionyl-[peptide] + formate. Functionally, removes the formyl group from the N-terminal Met of newly synthesized proteins. Requires at least a dipeptide for an efficient rate of reaction. N-terminal L-methionine is a prerequisite for activity but the enzyme has broad specificity at other positions. The chain is Peptide deformylase 2 from Gloeobacter violaceus (strain ATCC 29082 / PCC 7421).